A 488-amino-acid polypeptide reads, in one-letter code: MGRPLHLVLLSASLAGLLLLGESLFIRREQANNILARVTRANSFLEEMKKGHLERECMEETCSYEEAREVFEDSDKTNEFWNKYKDGDQCETSPCQNQGKCKDGLGEYTCTCLEGFEGKNCELFTRKLCSLDNGDCDQFCHEEQNSVVCSCARGYTLADNGKACIPTGPYPCGKQTLERRKRSVAQATSSSGEAPDSITWKPYDAADLDPTENPFDLLDFNQTQPERGDNNLTRIVGGQECKDGECPWQALLINEENEGFCGGTILSEFYILTAAHCLYQAKRFKVRVGDRNTEQEEGGEAVHEVEVVIKHNRFTKETYDFDIAVLRLKTPITFRMNVAPACLPERDWAESTLMTQKTGIVSGFGRTHEKGRQSTRLKMLEVPYVDRNSCKLSSSFIITQNMFCAGYDTKQEDACQGDSGGPHVTRFKDTYFVTGIVSWGEGCARKGKYGIYTKVTAFLKWIDRSMKTRGLPKAKSHAPEVITSSPLK.

A signal peptide spans methionine 1–alanine 31. Residues asparagine 32–arginine 40 constitute a propeptide that is removed on maturation. Positions alanine 41 to lysine 85 constitute a Gla domain. 4-carboxyglutamate is present on residues glutamate 46, glutamate 47, glutamate 54, glutamate 56, glutamate 59, glutamate 60, glutamate 65, glutamate 66, glutamate 69, glutamate 72, and glutamate 79. The cysteines at positions 57 and 62 are disulfide-linked. The EGF-like 1; calcium-binding domain occupies aspartate 86–glutamate 122. Cystine bridges form between cysteine 90-cysteine 101, cysteine 95-cysteine 110, cysteine 112-cysteine 121, cysteine 129-cysteine 140, cysteine 136-cysteine 149, cysteine 151-cysteine 164, cysteine 172-cysteine 342, cysteine 241-cysteine 246, cysteine 261-cysteine 277, cysteine 390-cysteine 404, and cysteine 415-cysteine 443. Aspartate 103 is subject to (3R)-3-hydroxyaspartate. The region spanning threonine 125–isoleucine 165 is the EGF-like 2 domain. The segment at serine 183–tyrosine 203 is O-glycosylated at one site. The propeptide at serine 183 to arginine 234 is activation peptide. Threonine 199 and threonine 211 each carry an O-linked (GalNAc...) threonine glycan. N-linked (GlcNAc...) asparagine glycosylation is found at asparagine 221 and asparagine 231. In terms of domain architecture, Peptidase S1 spans isoleucine 235–lysine 467. Residues histidine 276 and aspartate 322 each act as charge relay system in the active site. The Charge relay system role is filled by serine 419. The segment at serine 476–serine 485 is O-glycosylated at one site.

This sequence belongs to the peptidase S1 family. In terms of assembly, the two chains are formed from a single-chain precursor by the excision of two Arg residues and are held together by 1 or more disulfide bonds. Forms a heterodimer with SERPINA5. Interacts (inactive and activated) with ixolaris, an anticoagulant protein from Ixodes scapularis saliva. Interacts (activated) with iripin-8, a serine protease inhibitor from Ixodes ricinus saliva. Interacts (activated) with FXa-directed anticoagulant from Aedes albopictus saliva. Interacts (activated) with guianensin, an anticoagulant protein from Simulium guianense saliva. Interacts (activated) with simukunin, an anticoagulant protein from Simulium vittatum saliva. The vitamin K-dependent, enzymatic carboxylation of some glutamate residues allows the modified protein to bind calcium. In terms of processing, N- and O-glycosylated. O-glycosylated with core 1 or possibly core 8 glycans. Post-translationally, proteolytically cleaved and activated by cathepsin CTSG. The activation peptide is cleaved by factor IXa (in the intrinsic pathway), or by factor VIIa (in the extrinsic pathway). The iron and 2-oxoglutarate dependent 3-hydroxylation of aspartate and asparagine is (R) stereospecific within EGF domains. Plasma; synthesized in the liver.

The protein localises to the secreted. It carries out the reaction Selective cleavage of Arg-|-Thr and then Arg-|-Ile bonds in prothrombin to form thrombin.. Its activity is regulated as follows. Inhibited by SERPINA5 and SERPINA10. Functionally, factor Xa is a vitamin K-dependent glycoprotein that converts prothrombin to thrombin in the presence of factor Va, calcium and phospholipid during blood clotting. Factor Xa activates pro-inflammatory signaling pathways in a protease-activated receptor (PAR)-dependent manner. Up-regulates expression of protease-activated receptors (PARs) F2R, F2RL1 and F2RL2 in dermal microvascular endothelial cells. Triggers the production of pro-inflammatory cytokines, such as MCP-1/CCL2 and IL6, in cardiac fibroblasts and umbilical vein endothelial cells in PAR-1/F2R-dependent manner. Triggers the production of pro-inflammatory cytokines, such as MCP-1/CCL2, IL6, TNF-alpha/TNF, IL-1beta/IL1B, IL8/CXCL8 and IL18, in endothelial cells and atrial tissues. Induces expression of adhesion molecules, such as ICAM1, VCAM1 and SELE, in endothelial cells and atrial tissues. Increases expression of phosphorylated ERK1/2 in dermal microvascular endothelial cells and atrial tissues. Triggers activation of the transcription factor NF-kappa-B in dermal microvascular endothelial cells and atrial tissues. Activates pro-inflammatory and pro-fibrotic responses in dermal fibroblasts and enhances wound healing probably via PAR-2/F2RL1-dependent mechanism. Activates barrier protective signaling responses in endothelial cells in PAR-2/F2RL1-dependent manner; the activity depends on the cleavage of PAR-2/F2RL1 by factor Xa. Up-regulates expression of plasminogen activator inhibitor 1 (SERPINE1) in atrial tissues. The chain is Coagulation factor X (F10) from Homo sapiens (Human).